The following is a 101-amino-acid chain: Large ribosomal subunit protein uL23 (101 aa).

This sequence belongs to the universal ribosomal protein uL23 family. As to quaternary structure, part of the 50S ribosomal subunit. Contacts protein L29, and trigger factor when it is bound to the ribosome.

In terms of biological role, one of the early assembly proteins it binds 23S rRNA. One of the proteins that surrounds the polypeptide exit tunnel on the outside of the ribosome. Forms the main docking site for trigger factor binding to the ribosome. The chain is Large ribosomal subunit protein uL23 from Tolumonas auensis (strain DSM 9187 / NBRC 110442 / TA 4).